The sequence spans 248 residues: Carbohydrate deacetylase (248 aa).

2 residues coordinate Mg(2+): His59 and His121.

This sequence belongs to the YdjC deacetylase family. Mg(2+) serves as cofactor.

In terms of biological role, probably catalyzes the deacetylation of acetylated carbohydrates an important step in the degradation of oligosaccharides. The chain is Carbohydrate deacetylase from Brevibacillus brevis (strain 47 / JCM 6285 / NBRC 100599).